We begin with the raw amino-acid sequence, 209 residues long: Large ribosomal subunit protein uL3 (209 aa).

It belongs to the universal ribosomal protein uL3 family. Part of the 50S ribosomal subunit. Forms a cluster with proteins L14 and L19.

One of the primary rRNA binding proteins, it binds directly near the 3'-end of the 23S rRNA, where it nucleates assembly of the 50S subunit. This chain is Large ribosomal subunit protein uL3, found in Clostridium tetani (strain Massachusetts / E88).